The sequence spans 523 residues: Frizzled-4 (523 aa).

The first 22 residues, 1 to 22, serve as a signal peptide directing secretion; the sequence is MGARSLTLLYLLCCLVVGLIAG. Residues 23–198 are Extracellular-facing; sequence FGEEEERSCD…KCGYDSGLYN (176 aa). Residues 26-147 enclose the FZ domain; it reads EEERSCDPIR…NDHNHMCMEG (122 aa). Disulfide bonds link C31-C92, C39-C85, C76-C114, C103-C144, C107-C131, C167-C186, C190-C268, and C288-C363. The N-linked (GlcNAc...) asparagine glycan is linked to N45. N-linked (GlcNAc...) asparagine glycosylation occurs at N130. Residues 199–229 traverse the membrane as a helical segment; it reads RLSKEFTDIWMAVWASLCFISTAFTVLTFLI. The Cytoplasmic segment spans residues 230 to 235; it reads DSSRFC. The helical transmembrane segment at 236–261 threads the bilayer; that stretch reads YPERPIIFLSMCYNIYSIAYIVRLTV. Residues 262 to 285 are Extracellular-facing; it reads GRERISCDFEEAAEPVLIQEGLKN. Residues 286-319 form a helical membrane-spanning segment; sequence TGCAIIFLLMYFFGMASSIWWVILTLTWFLAAGL. At 320–322 the chain is on the cytoplasmic side; the sequence is KWG. A helical membrane pass occupies residues 323–351; the sequence is HEAIEMHSSYFHIAAWAIPAVKTIVILIM. The Extracellular portion of the chain corresponds to 352 to 369; it reads RLVDADELTGLCYVGNQN. The chain crosses the membrane as a helical span at residues 370–396; sequence IDALTGFVVAPLFTYLVIGTLFIAAGL. Residues 397-417 are Cytoplasmic-facing; that stretch reads VALFKIRSNLQKDGTKTDKLE. A helical transmembrane segment spans residues 418-443; that stretch reads RLMVKIGVFSVLYTVPATCVIACYFY. The Extracellular segment spans residues 444–459; that stretch reads EVSNWNVFRYTADDSN. Residues 460–481 form a helical membrane-spanning segment; it reads MAVEMLNIFMSLLVGITSGMWI. At 482-523 the chain is on the cytoplasmic side; the sequence is WSAKTLHTWQKCTNRLVNSGKVKRKKRVDGWVKPGKGNETVV. Positions 485–490 match the Lys-Thr-X-X-X-Trp motif, mediates interaction with the PDZ domain of Dvl family members motif; the sequence is KTLHTW. Positions 521 to 523 match the PDZ-binding motif; that stretch reads TVV.

Belongs to the G-protein coupled receptor Fz/Smo family. Interacts (via FZ domain) with tsku; tsku competes with wnt2b for binding to fzd4, inhibiting Wnt signaling and repressing peripheral eye development.

The protein localises to the cell membrane. Receptor for Wnt proteins. Most frizzled receptors are coupled to the beta-catenin canonical signaling pathway, which leads to the activation of disheveled proteins, inhibition of GSK-3 kinase, nuclear accumulation of beta-catenin and activation of Wnt target genes. A second signaling pathway involving PKC and calcium fluxes has been seen for some family members, but it is not yet clear if it represents a distinct pathway or if it can be integrated in the canonical pathway, as PKC seems to be required for Wnt-mediated inactivation of GSK-3 kinase. Both pathways seem to involve interactions with G-proteins. May be involved in transduction and intercellular transmission of polarity information during tissue morphogenesis and/or in differentiated tissues. Activated by Wnt5A. The polypeptide is Frizzled-4 (fzd4) (Xenopus laevis (African clawed frog)).